The following is a 227-amino-acid chain: tRNA (guanine-N(1)-)-methyltransferase (227 aa).

S-adenosyl-L-methionine contacts are provided by residues G112 and 132 to 137; that span reads IGDFIL.

Belongs to the RNA methyltransferase TrmD family. Homodimer.

It is found in the cytoplasm. The catalysed reaction is guanosine(37) in tRNA + S-adenosyl-L-methionine = N(1)-methylguanosine(37) in tRNA + S-adenosyl-L-homocysteine + H(+). Its function is as follows. Specifically methylates guanosine-37 in various tRNAs. This is tRNA (guanine-N(1)-)-methyltransferase from Sulfurovum sp. (strain NBC37-1).